A 150-amino-acid polypeptide reads, in one-letter code: Snaclec CTL-Eoc125 (150 aa).

The signal sequence occupies residues 1–23 (MGRFISVSFGLLVVFLSLSGIGA). Cystine bridges form between cysteine 27–cysteine 38, cysteine 55–cysteine 144, and cysteine 121–cysteine 136. Positions 34–145 (YEGHCYKVFS…CSSTQQFICK (112 aa)) constitute a C-type lectin domain.

The protein belongs to the snaclec family. As to quaternary structure, heterodimer; disulfide-linked. In terms of tissue distribution, expressed by the venom gland.

The protein localises to the secreted. Functionally, interferes with one step of hemostasis (modulation of platelet aggregation, or coagulation cascade, for example). This is Snaclec CTL-Eoc125 from Echis ocellatus (Ocellated saw-scaled viper).